Reading from the N-terminus, the 20-residue chain is 7.2 kDa cytotoxin RVV-7 (20 aa).

As to quaternary structure, monomer. Homodimerizes during storage at 30 degrees Celsius (observed after 3 days). As to expression, expressed by the venom gland.

The protein resides in the secreted. It is found in the target cell membrane. This three-finger cytotoxin shows cytotoxicity and direct nephrotoxicity. The cytotoxicity has been observed on B16F10 melanoma cells (EC(50)=2.56 uM) and on kidney proximal tubular epithelium LLCPK1 cells (EC(50)=4.79 uM); it is due to necrotic cell death and not to apoptosis. Direct nephrotoxicity has been deduced from binding to LLCPK1 cell line and to kidney membranes. In addition, after intravenous injection into mice tail vein, the toxin principally accumulates in kidney, but only minimally in blood, liver and brain. In Daboia russelii (Russel's viper), this protein is 7.2 kDa cytotoxin RVV-7.